Consider the following 245-residue polypeptide: MGGQKTHFGFSTVNEDEKAGKVAEVFHSVAKNYDIMNDVMSAGLHRVWKHFTINTAHLKKGDKVLDIAGGTGDLSRGWAKRVGKEGEVWLTDINSSMLTVGRDRLLNEGMILPVSLADAEKLPFPDNYFNLVSVAFGLRNMTHKDAALKEMYRVLKPGGTLLVLEFSKIYKPLEGAYDFYSFKLLPVMGKLIAKDADSYQYLAESIRMHPDQETLKQMMLDAGFDSVDYHNMSAGIVALHKGVKF.

S-adenosyl-L-methionine is bound by residues Thr-71, Asp-92, and 118 to 119; that span reads DA.

Belongs to the class I-like SAM-binding methyltransferase superfamily. MenG/UbiE family.

The enzyme catalyses a 2-demethylmenaquinol + S-adenosyl-L-methionine = a menaquinol + S-adenosyl-L-homocysteine + H(+). The catalysed reaction is a 2-methoxy-6-(all-trans-polyprenyl)benzene-1,4-diol + S-adenosyl-L-methionine = a 5-methoxy-2-methyl-3-(all-trans-polyprenyl)benzene-1,4-diol + S-adenosyl-L-homocysteine + H(+). Its pathway is quinol/quinone metabolism; menaquinone biosynthesis; menaquinol from 1,4-dihydroxy-2-naphthoate: step 2/2. It functions in the pathway cofactor biosynthesis; ubiquinone biosynthesis. In terms of biological role, methyltransferase required for the conversion of demethylmenaquinol (DMKH2) to menaquinol (MKH2) and the conversion of 2-polyprenyl-6-methoxy-1,4-benzoquinol (DDMQH2) to 2-polyprenyl-3-methyl-6-methoxy-1,4-benzoquinol (DMQH2). This chain is Ubiquinone/menaquinone biosynthesis C-methyltransferase UbiE, found in Neisseria meningitidis serogroup C / serotype 2a (strain ATCC 700532 / DSM 15464 / FAM18).